The primary structure comprises 195 residues: 3-isopropylmalate dehydratase small subunit (195 aa).

This sequence belongs to the LeuD family. LeuD type 1 subfamily. Heterodimer of LeuC and LeuD.

It catalyses the reaction (2R,3S)-3-isopropylmalate = (2S)-2-isopropylmalate. Its pathway is amino-acid biosynthesis; L-leucine biosynthesis; L-leucine from 3-methyl-2-oxobutanoate: step 2/4. In terms of biological role, catalyzes the isomerization between 2-isopropylmalate and 3-isopropylmalate, via the formation of 2-isopropylmaleate. The sequence is that of 3-isopropylmalate dehydratase small subunit from Parafrankia sp. (strain EAN1pec).